Here is a 480-residue protein sequence, read N- to C-terminus: Major facilitator superfamily domain-containing protein 12 (480 aa).

Met-1 carries the post-translational modification N-acetylmethionine. At 1–26 (MGPGPPAAGAAPSPRPLSLVARLSYA) the chain is on the cytoplasmic side. Residues 27-47 (VGHFLNDLCASMWFTYLLLYL) traverse the membrane as a helical segment. The Lumenal portion of the chain corresponds to 48-56 (HSVRAYSSR). The chain crosses the membrane as a helical span at residues 57-77 (GAGLLLLLGQVADGLCTPLVG). Residues 78 to 97 (YEADRAASCCARYGPRKAWH) are Cytoplasmic-facing. Residues 98–118 (LVGTVCVLLSFPFIFSPCLGC) form a helical membrane-spanning segment. At 119 to 124 (GAATPE) the chain is on the lumenal side. Residues 125 to 145 (WAALLYYGPFIVIFQFGWAST) form a helical membrane-spanning segment. The Cytoplasmic segment spans residues 146–170 (QISHLSLIPELVTNDHEKVELTALR). The chain crosses the membrane as a helical span at residues 171-191 (YAFTVVANITVYGAAWLLLHL). The Lumenal portion of the chain corresponds to 192-218 (QGSSRVEPTQDISISDQLGGQDVPVFR). Residues 219–239 (NLSLLVVGVGAVFSLLFHLGT) form a helical membrane-spanning segment. At 240–279 (RERRRPHAEEPGEHTPLLAPATAQPLLLWKHWLREPAFYQ) the chain is on the cytoplasmic side. Position 254 is a phosphothreonine; by MTOR (Thr-254). A helical transmembrane segment spans residues 280-302 (VGILYMTTRLIVNLSQTYMAMYL). The Lumenal segment spans residues 303–310 (TYSLHLPK). The helical transmembrane segment at 311 to 331 (KFIATIPLVMYLSGFLSSFLM) threads the bilayer. Residues 332-347 (KPINKCIGRNMTYFSG) lie on the Cytoplasmic side of the membrane. The next 2 membrane-spanning stretches (helical) occupy residues 348-368 (LLVI…GVAV) and 369-389 (YAAA…SLAM). Residues 390-402 (TADLIGPHTNSGA) lie on the Cytoplasmic side of the membrane. Residues 403 to 423 (FVYGSMSFLDKVANGLAVMAI) form a helical membrane-spanning segment. Topologically, residues 424 to 446 (QSLHPCPSELCCRACVSFYHWAM) are lumenal. Residues 447-467 (VAVTGGVGVAAALCLCSLLLW) form a helical membrane-spanning segment. Topologically, residues 468-480 (PTRLRRWDRDARP) are cytoplasmic.

It belongs to the major facilitator superfamily. Phosphorylation at Thr-254 by MTOR via mTORC1 pathway promotes cysteine transport in lysosomes, thereby regulating lysosomal cysteine and cystine storage and redox homeostasis. Widely expressed, with high expression in primary melanocytes.

Its subcellular location is the melanosome membrane. It is found in the lysosome membrane. It catalyses the reaction L-cysteine(in) = L-cysteine(out). In terms of biological role, transporter that mediates the import of cysteine into melanosomes, thereby regulating skin pigmentation. In melanosomes, cysteine import is required both for normal levels of cystine, the oxidized dimer of cysteine, and provide cysteine for the production of the cysteinyldopas used in pheomelanin synthesis, thereby regulating skin pigmentation. Also catalyzes import of cysteine into lysosomes in non-pigmented cells, regulating lysosomal cystine and cysteine storage, which is essnetial for redox homeostasis. The polypeptide is Major facilitator superfamily domain-containing protein 12 (Homo sapiens (Human)).